A 130-amino-acid polypeptide reads, in one-letter code: uncharacterized protein (130 aa).

The next 3 membrane-spanning stretches (helical) occupy residues 34-54 (AILI…FAFF), 73-93 (LLLT…GWLA), and 107-127 (FGTG…IVWI).

It localises to the cell membrane. This is an uncharacterized protein from Mycoplasma pneumoniae (strain ATCC 29342 / M129 / Subtype 1) (Mycoplasmoides pneumoniae).